The following is a 476-amino-acid chain: Aspartyl/glutamyl-tRNA(Asn/Gln) amidotransferase subunit B (476 aa).

It belongs to the GatB/GatE family. GatB subfamily. As to quaternary structure, heterotrimer of A, B and C subunits.

The enzyme catalyses L-glutamyl-tRNA(Gln) + L-glutamine + ATP + H2O = L-glutaminyl-tRNA(Gln) + L-glutamate + ADP + phosphate + H(+). The catalysed reaction is L-aspartyl-tRNA(Asn) + L-glutamine + ATP + H2O = L-asparaginyl-tRNA(Asn) + L-glutamate + ADP + phosphate + 2 H(+). Allows the formation of correctly charged Asn-tRNA(Asn) or Gln-tRNA(Gln) through the transamidation of misacylated Asp-tRNA(Asn) or Glu-tRNA(Gln) in organisms which lack either or both of asparaginyl-tRNA or glutaminyl-tRNA synthetases. The reaction takes place in the presence of glutamine and ATP through an activated phospho-Asp-tRNA(Asn) or phospho-Glu-tRNA(Gln). The polypeptide is Aspartyl/glutamyl-tRNA(Asn/Gln) amidotransferase subunit B (Bacillus licheniformis (strain ATCC 14580 / DSM 13 / JCM 2505 / CCUG 7422 / NBRC 12200 / NCIMB 9375 / NCTC 10341 / NRRL NRS-1264 / Gibson 46)).